The sequence spans 229 residues: UPF0758 protein CA_C1241 (229 aa).

An MPN domain is found at 107–229 (KITSPKEAAN…YISLKEEGLL (123 aa)). 3 residues coordinate Zn(2+): His178, His180, and Asp191. Residues 178-191 (HNHPSGDPKPSNED) carry the JAMM motif motif.

Belongs to the UPF0758 family.

This is UPF0758 protein CA_C1241 from Clostridium acetobutylicum (strain ATCC 824 / DSM 792 / JCM 1419 / IAM 19013 / LMG 5710 / NBRC 13948 / NRRL B-527 / VKM B-1787 / 2291 / W).